Consider the following 295-residue polypeptide: uncharacterized protein (295 aa).

The segment covering 57–67 has biased composition (basic residues); it reads RKLLVKQKRKS. The disordered stretch occupies residues 57-94; sequence RKLLVKQKRKSNKEFQSNIIKKRKDEERKGTLKTEQAN. Residues 79–88 are compositionally biased toward basic and acidic residues; sequence RKDEERKGTL. Coiled-coil stretches lie at residues 87–116 and 259–286; these read TLKT…YDQY and DVLT…LGER.

It is found in the nucleus. This is an uncharacterized protein from Schizosaccharomyces pombe (strain 972 / ATCC 24843) (Fission yeast).